The chain runs to 97 residues: U-scoloptoxin(10)-Sa2a (97 aa).

The N-terminal stretch at 1 to 23 (MNKSMLIFFTILFLTYIIEEKEA) is a signal peptide.

This sequence belongs to the scoloptoxin-10 family. Post-translationally, contains 3 disulfide bonds. Expressed by the venom gland.

The protein resides in the secreted. This Scolopendra alternans (Florida Keys giant centipede) protein is U-scoloptoxin(10)-Sa2a.